The chain runs to 210 residues: Probable nicotinate-nucleotide adenylyltransferase (210 aa).

This sequence belongs to the NadD family.

It carries out the reaction nicotinate beta-D-ribonucleotide + ATP + H(+) = deamido-NAD(+) + diphosphate. It functions in the pathway cofactor biosynthesis; NAD(+) biosynthesis; deamido-NAD(+) from nicotinate D-ribonucleotide: step 1/1. Catalyzes the reversible adenylation of nicotinate mononucleotide (NaMN) to nicotinic acid adenine dinucleotide (NaAD). The sequence is that of Probable nicotinate-nucleotide adenylyltransferase from Streptococcus mutans serotype c (strain ATCC 700610 / UA159).